Here is a 496-residue protein sequence, read N- to C-terminus: Versicolorin B desaturase stcL (496 aa).

The chain crosses the membrane as a helical span at residues 3–23 (FLSLPILTALGAVVYVLFQLV). Cys440 lines the heme pocket.

The protein belongs to the cytochrome P450 family. Heme is required as a cofactor.

The protein resides in the membrane. The catalysed reaction is versicolorin B + NADPH + O2 + H(+) = versicolorin A + NADP(+) + 2 H2O. It functions in the pathway mycotoxin biosynthesis; sterigmatocystin biosynthesis. In terms of biological role, cytochrome P450 monooxygenase; part of the gene cluster that mediates the biosynthesis of sterigmatocystin (ST), a polyketide-derived furanocoumarin which is part of the most toxic and carcinogenic compounds among the known mycotoxins. The first step in the biosynthesis of sterigmatocystin is the production of hexanoate by the fatty acid synthase (FAS) units stcJ and stcK. The polyketide backbone is assembled by the non-reducing polyketide synthase stcA by condensation of the starter hexanoyl-CoA and 7 malonyl-CoA extender units followed by cyclization and release of norsolorinic acid. Norsolorinic acid is the first stable intermediate in the biosynthesis of sterigmatocystin and is converted into averantin (AVN) by the ketoreductase stcE which reduces the hexanoate ketone to an alcohol. Averantin is then oxidized into 5'-hydroxyaverantin (HAVN) by the cytochrome P450 monooxygenase stcF. 5'-hydroxyaverantin is further converted to 5'-oxyaverantin (OAVN) by the 5'-hydroxyaverantin dehydrogenase stcG. The next step is the conversion of OAVN into averufin (AVF) which is catalyzed by a yet to be identified enzyme. The cytochrome P450 monooxygenase stcB and the flavin-binding monooxygenase stcW are both required for the conversion of averufin to 1-hydroxyversicolorone. The esterase stcI probably catalyzes the formation of versiconal hemiacetal acetate from 1-hydroxyversicolorone. The oxydoreductase stcN then probably catalyzes the biosynthetic step from versiconal to versicolorin B (VERB). The next step is performed by the versicolorin B desaturase stcL to produce versicolorin A (VERA). The ketoreductase stcU and the cytochrome P450 monooxygenase stcS are involved in the conversion of versicolorin A to demethylsterigmatocystin. The Baeyer-Villiger oxidas stcQ and the reductase stcR might be involved in the biosynthetic step from versicolorin A to demethylsterigmatocystin. The final step in the biosynthesis of sterigmatocystin is the methylation of demethylsterigmatocystin catalyzed by the methyltransferase stcP. The sequence is that of Versicolorin B desaturase stcL from Emericella nidulans (strain FGSC A4 / ATCC 38163 / CBS 112.46 / NRRL 194 / M139) (Aspergillus nidulans).